The primary structure comprises 126 residues: Holo-[acyl-carrier-protein] synthase (126 aa).

Positions 9 and 58 each coordinate Mg(2+).

It belongs to the P-Pant transferase superfamily. AcpS family. Requires Mg(2+) as cofactor.

The protein resides in the cytoplasm. It catalyses the reaction apo-[ACP] + CoA = holo-[ACP] + adenosine 3',5'-bisphosphate + H(+). Functionally, transfers the 4'-phosphopantetheine moiety from coenzyme A to a Ser of acyl-carrier-protein. The protein is Holo-[acyl-carrier-protein] synthase of Vibrio campbellii (strain ATCC BAA-1116).